The primary structure comprises 455 residues: tRNA modification GTPase MnmE (455 aa).

(6S)-5-formyl-5,6,7,8-tetrahydrofolate contacts are provided by Arg26, Glu86, and Arg125. One can recognise a TrmE-type G domain in the interval 222–376 (GLKTAIIGRP…VEEKINQIFF (155 aa)). K(+) is bound at residue Asn232. GTP contacts are provided by residues 232–237 (NVGKSS), 251–257 (TDIAGTT), and 276–279 (DTAG). Residue Ser236 participates in Mg(2+) binding. K(+) is bound by residues Thr251, Ile253, and Thr256. Thr257 contributes to the Mg(2+) binding site. Lys455 is a binding site for (6S)-5-formyl-5,6,7,8-tetrahydrofolate.

The protein belongs to the TRAFAC class TrmE-Era-EngA-EngB-Septin-like GTPase superfamily. TrmE GTPase family. As to quaternary structure, homodimer. Heterotetramer of two MnmE and two MnmG subunits. Requires K(+) as cofactor.

The protein resides in the cytoplasm. Functionally, exhibits a very high intrinsic GTPase hydrolysis rate. Involved in the addition of a carboxymethylaminomethyl (cmnm) group at the wobble position (U34) of certain tRNAs, forming tRNA-cmnm(5)s(2)U34. This Lactococcus lactis subsp. lactis (strain IL1403) (Streptococcus lactis) protein is tRNA modification GTPase MnmE.